A 136-amino-acid chain; its full sequence is Keratin-associated protein 15-1 (136 aa).

It belongs to the PMG family. As to quaternary structure, interacts with hair keratins.

Its function is as follows. In the hair cortex, hair keratin intermediate filaments are embedded in an interfilamentous matrix, consisting of hair keratin-associated proteins (KRTAP), which are essential for the formation of a rigid and resistant hair shaft through their extensive disulfide bond cross-linking with abundant cysteine residues of hair keratins. The matrix proteins include the high-sulfur and high-glycine-tyrosine keratins. This chain is Keratin-associated protein 15-1 (KRTAP15-1), found in Capra hircus (Goat).